We begin with the raw amino-acid sequence, 1152 residues long: Nardilysin (1152 aa).

An N-terminal signal peptide occupies residues 1 to 20 (MLRKVTVAAVCATRRKLCEA). Disordered stretches follow at residues 81–108 (LGAD…KSPS) and 133–208 (MEGK…KKTT). Phosphoserine is present on residues Ser-86, Ser-94, and Ser-96. The segment covering 141 to 198 (TDDEEEEEVEEEEEDDDEDSGAEIEDDDEEGFDDEDEFDDEHDDDLDTEDNELEELEE) has biased composition (acidic residues). His-234 lines the Zn(2+) pocket. Glu-237 (proton acceptor) is an active-site residue. Positions 238 and 315 each coordinate Zn(2+).

This sequence belongs to the peptidase M16 family. Interacts with BACE1 and NRG1. The cofactor is Zn(2+).

Its subcellular location is the mitochondrion. It is found in the cell projection. It localises to the dendrite. The catalysed reaction is Hydrolysis of polypeptides, preferably at -Xaa-|-Arg-Lys-, and less commonly at -Arg-|-Arg-Xaa-, in which Xaa is not Arg or Lys.. Functionally, cleaves peptide substrates on the N-terminus of arginine residues in dibasic pairs. Is a critical activator of BACE1- and ADAM17-mediated pro-neuregulin ectodomain shedding, involved in the positive regulation of axonal maturation and myelination. Required for proper functioning of 2-oxoglutarate dehydrogenase (OGDH). In Pongo abelii (Sumatran orangutan), this protein is Nardilysin.